The sequence spans 631 residues: Transmembrane and coiled-coil domain-containing protein 4 (631 aa).

A disordered region spans residues 1 to 26; the sequence is MATWNRPHPRLPVAPEPVAEGESQQP. Residues 153–183 adopt a coiled-coil conformation; the sequence is EEVFLESLKDAKEEESETAEESRKRKEKRRK. 4 consecutive transmembrane segments (helical) span residues 187 to 203, 204 to 220, 228 to 248, and 343 to 363; these read YLLI…VIGV, TGGL…ATII, LGSV…GAGL, and LSGI…ANVI. The tract at residues 523–631 is disordered; it reads WSEKGLPLAP…ETQESCAELD (109 aa). A compositionally biased stretch (polar residues) spans 571-590; the sequence is IPSSASQAQVPAGLDQSTED.

The protein belongs to the TMCO4 family.

It localises to the membrane. The sequence is that of Transmembrane and coiled-coil domain-containing protein 4 (Tmco4) from Rattus norvegicus (Rat).